A 203-amino-acid chain; its full sequence is Thymidylate kinase (203 aa).

14–21 (GGEGIGKS) lines the ATP pocket.

Belongs to the thymidylate kinase family.

It catalyses the reaction dTMP + ATP = dTDP + ADP. Its function is as follows. Phosphorylation of dTMP to form dTDP in both de novo and salvage pathways of dTTP synthesis. The protein is Thymidylate kinase of Rickettsia peacockii (strain Rustic).